The primary structure comprises 226 residues: tRNA (guanine-N(7)-)-methyltransferase (226 aa).

Residues glutamate 57, glutamate 82, aspartate 109, and aspartate 132 each coordinate S-adenosyl-L-methionine. Aspartate 132 is a catalytic residue. Residues lysine 136, aspartate 168, and 205–208 each bind substrate; that span reads TKFE.

The protein belongs to the class I-like SAM-binding methyltransferase superfamily. TrmB family.

The catalysed reaction is guanosine(46) in tRNA + S-adenosyl-L-methionine = N(7)-methylguanosine(46) in tRNA + S-adenosyl-L-homocysteine. Its pathway is tRNA modification; N(7)-methylguanine-tRNA biosynthesis. Functionally, catalyzes the formation of N(7)-methylguanine at position 46 (m7G46) in tRNA. The chain is tRNA (guanine-N(7)-)-methyltransferase from Legionella pneumophila subsp. pneumophila (strain Philadelphia 1 / ATCC 33152 / DSM 7513).